We begin with the raw amino-acid sequence, 245 residues long: MTETKEERVHQVFEKIYKRYDVMNSVISFQRHKAWRKDTMKRMNVQEGQSALDVCCGTADWAIALGKAVGPTGHVEGLDFSENMLSIGKKKIADERLDHVFLRHGNAMELPYADDTFDFVTIGFGLRNVPDYMQVLREMARVTKPGGKVVCLETSQPTIPVFKQLYFFYFRHVMPLFGKMFAKSYDEYSWLQESTLSFPGRDRLAQMFKEVGLTDVQVKPYSGGAAAMHLGVKESYDEESRNVTC.

Residues T58, D79, and N106 to A107 each bind S-adenosyl-L-methionine.

This sequence belongs to the class I-like SAM-binding methyltransferase superfamily. MenG/UbiE family.

The catalysed reaction is a 2-demethylmenaquinol + S-adenosyl-L-methionine = a menaquinol + S-adenosyl-L-homocysteine + H(+). Its pathway is quinol/quinone metabolism; menaquinone biosynthesis; menaquinol from 1,4-dihydroxy-2-naphthoate: step 2/2. Methyltransferase required for the conversion of demethylmenaquinol (DMKH2) to menaquinol (MKH2). This chain is Demethylmenaquinone methyltransferase, found in Halalkalibacterium halodurans (strain ATCC BAA-125 / DSM 18197 / FERM 7344 / JCM 9153 / C-125) (Bacillus halodurans).